The primary structure comprises 241 residues: Phosphoribosylformylglycinamidine synthase subunit PurQ (241 aa).

One can recognise a Glutamine amidotransferase type-1 domain in the interval 6 to 241 (NVGIVVFPGS…QSLLLASAFA (236 aa)). Residue Cys-90 is the Nucleophile of the active site. Active-site residues include His-207 and Glu-209.

Part of the FGAM synthase complex composed of 1 PurL, 1 PurQ and 2 PurS subunits.

The protein localises to the cytoplasm. It carries out the reaction N(2)-formyl-N(1)-(5-phospho-beta-D-ribosyl)glycinamide + L-glutamine + ATP + H2O = 2-formamido-N(1)-(5-O-phospho-beta-D-ribosyl)acetamidine + L-glutamate + ADP + phosphate + H(+). The enzyme catalyses L-glutamine + H2O = L-glutamate + NH4(+). Its pathway is purine metabolism; IMP biosynthesis via de novo pathway; 5-amino-1-(5-phospho-D-ribosyl)imidazole from N(2)-formyl-N(1)-(5-phospho-D-ribosyl)glycinamide: step 1/2. Its function is as follows. Part of the phosphoribosylformylglycinamidine synthase complex involved in the purines biosynthetic pathway. Catalyzes the ATP-dependent conversion of formylglycinamide ribonucleotide (FGAR) and glutamine to yield formylglycinamidine ribonucleotide (FGAM) and glutamate. The FGAM synthase complex is composed of three subunits. PurQ produces an ammonia molecule by converting glutamine to glutamate. PurL transfers the ammonia molecule to FGAR to form FGAM in an ATP-dependent manner. PurS interacts with PurQ and PurL and is thought to assist in the transfer of the ammonia molecule from PurQ to PurL. The chain is Phosphoribosylformylglycinamidine synthase subunit PurQ from Thermosynechococcus vestitus (strain NIES-2133 / IAM M-273 / BP-1).